Here is a 143-residue protein sequence, read N- to C-terminus: MTTSRRKAREIVLQALYEQDLAGHNAEDVLKRLLTETPQTEENAEFIFRLTNAIVKHKDLLDENIRQFASAWPVEQLSYIDRNVLRLAIFEIIHENDVPIKVAINEAVELAKSFGGNSSARFINGVLSSVSKALADTAKQREE.

This sequence belongs to the NusB family.

Functionally, involved in transcription antitermination. Required for transcription of ribosomal RNA (rRNA) genes. Binds specifically to the boxA antiterminator sequence of the ribosomal RNA (rrn) operons. This Dehalococcoides mccartyi (strain ATCC BAA-2266 / KCTC 15142 / 195) (Dehalococcoides ethenogenes (strain 195)) protein is Transcription antitermination protein NusB.